Here is a 660-residue protein sequence, read N- to C-terminus: ATPase WRNIP1 (660 aa).

The UBZ4-type zinc-finger motif lies at 17 to 44; it reads QVQCPVCQQMMPAAHINSHLDRCLLLHP. Zn(2+)-binding residues include cysteine 20, cysteine 23, histidine 31, histidine 35, and cysteine 39. The segment at 50–191 is disordered; that stretch reads PAAGPHRAGE…DDPGHWDADA (142 aa). Phosphoserine occurs at positions 65 and 75. Residues 76-89 show a composition bias toward polar residues; it reads ESSALKQPATPTAA. Lysine 81 participates in a covalent cross-link: Glycyl lysine isopeptide (Lys-Gly) (interchain with G-Cter in ubiquitin). The residue at position 85 (threonine 85) is a Phosphothreonine. Residues serine 91 and serine 92 each carry the phosphoserine modification. Over residues 92-104 the composition is skewed to acidic residues; it reads SEGEGEEGDDGGE. The residue at position 116 (threonine 116) is a Phosphothreonine. Positions 135–155 are enriched in low complexity; it reads ARKGLGKRPAAAAAAGSASPR. Lysine 141 participates in a covalent cross-link: Glycyl lysine isopeptide (Lys-Gly) (interchain with G-Cter in ubiquitin). Serine 153 bears the Phosphoserine mark. Positions 159–182 are enriched in acidic residues; it reads ETEAQEEEEAGVDGDGDADVDGED. Lysine 220 is covalently cross-linked (Glycyl lysine isopeptide (Lys-Gly) (interchain with G-Cter in ubiquitin)). Residue 265–271 coordinates ATP; it reads PGCGKTT. Residues lysine 296, lysine 305, lysine 311, lysine 317, and lysine 330 each participate in a glycyl lysine isopeptide (Lys-Gly) (interchain with G-Cter in ubiquitin) cross-link. Residue lysine 477 forms a Glycyl lysine isopeptide (Lys-Gly) (interchain with G-Cter in SUMO2); alternate linkage. Lysine 477 is covalently cross-linked (Glycyl lysine isopeptide (Lys-Gly) (interchain with G-Cter in ubiquitin); alternate). Phosphotyrosine is present on residues tyrosine 529 and tyrosine 557. Lysine 622 participates in a covalent cross-link: Glycyl lysine isopeptide (Lys-Gly) (interchain with G-Cter in ubiquitin). A Glycyl lysine isopeptide (Lys-Gly) (interchain with G-Cter in ubiquitin); alternate cross-link involves residue lysine 628. At lysine 628 the chain carries N6-acetyllysine; alternate. Lysine 631 participates in a covalent cross-link: Glycyl lysine isopeptide (Lys-Gly) (interchain with G-Cter in ubiquitin).

This sequence belongs to the AAA ATPase family. RarA/MGS1/WRNIP1 subfamily. Forms homooligomers, possibly octamers. Directly interacts with POLD1, POLD2 and POLD4. Interacts with the N-terminal domain of WRN. Interacts (via UBZ4-type zinc finger) with monoubiquitin and polyubiquitin. Interacts with TRIM14 and PPP6C; these interactions positively regulate the RIGI signaling pathway. Sumoylated with SUMO1 and SUMO2/3. In terms of tissue distribution, ubiquitously expressed.

It is found in the nucleus. The protein resides in the cytoplasm. The catalysed reaction is ATP + H2O = ADP + phosphate + H(+). Its function is as follows. Functions as a modulator of initiation or reinitiation events during DNA polymerase delta-mediated DNA synthesis. In the presence of ATP, stimulation of DNA polymerase delta-mediated DNA synthesis is decreased. Also plays a role in the innate immune defense against viruses. Stabilizes the RIGI dsRNA interaction and promotes RIGI 'Lys-63'-linked polyubiquitination. In turn, RIGI transmits the signal through mitochondrial MAVS. This Rattus norvegicus (Rat) protein is ATPase WRNIP1.